The following is a 339-amino-acid chain: Transcription initiation factor IIB (339 aa).

Residues 39–70 (EELICPVCGSKSIIKDYERAEIVCEMCGCVLQ) form a TFIIB-type zinc finger. Positions 43, 46, 62, and 65 each coordinate Zn(2+). Tandem repeats lie at residues 156–239 (SELD…SREL) and 250–331 (DYVP…ELTE).

The protein belongs to the TFIIB family.

In terms of biological role, stabilizes TBP binding to an archaeal box-A promoter. Also responsible for recruiting RNA polymerase II to the pre-initiation complex (DNA-TBP-TFIIB). The polypeptide is Transcription initiation factor IIB (Methanococcus maripaludis (strain C5 / ATCC BAA-1333)).